The chain runs to 202 residues: Small ribosomal subunit protein uS4 (202 aa).

Residues 15 to 43 form a disordered region; that stretch reads LGDLPGLTRKAAKRSNPPGQHGNARRKRS. An S4 RNA-binding domain is found at 90-152; the sequence is GRLDNVCFRL…KGSKKLAEGN (63 aa).

Belongs to the universal ribosomal protein uS4 family. As to quaternary structure, part of the 30S ribosomal subunit. Contacts protein S5. The interaction surface between S4 and S5 is involved in control of translational fidelity.

Functionally, one of the primary rRNA binding proteins, it binds directly to 16S rRNA where it nucleates assembly of the body of the 30S subunit. In terms of biological role, with S5 and S12 plays an important role in translational accuracy. The polypeptide is Small ribosomal subunit protein uS4 (Prochlorococcus marinus (strain SARG / CCMP1375 / SS120)).